The primary structure comprises 838 residues: E3 ubiquitin-protein ligase RNF19A (838 aa).

Residues 128 to 351 are TRIAD supradomain; sequence DFIECPLCLL…LSPSGCTFWG (224 aa). Cys-132, Cys-135, Cys-150, His-152, Cys-155, Cys-158, Cys-176, Cys-179, Cys-219, Cys-224, Cys-241, Cys-246, Cys-251, Cys-254, His-259, Cys-264, Cys-301, and Cys-304 together coordinate Zn(2+). The segment at 132 to 179 adopts an RING-type 1 zinc-finger fold; it reads CPLCLLRHSKDRFPEIMTCHHRSCVDCLRQYLRIEISESRVNISCPEC. An IBR-type zinc finger spans residues 199–264; it reads EKYEEFMLRR…KQIWHPNQTC (66 aa). An RING-type 2; atypical zinc finger spans residues 301 to 332; it reads CPRCAAYIIKMNDGSCNHMTCAVCGCEFCWLC. The active site involves Cys-316. Zn(2+) is bound by residues Cys-321, Cys-324, Cys-329, Cys-332, His-340, and Cys-347. The next 2 helical transmembrane spans lie at 368-388 and 424-444; these read LVGA…AMII and VIVS…IMLA. 2 disordered regions span residues 622–685 and 700–721; these read SKPS…SNMK and QQST…PSVA. Ser-631 carries the phosphoserine modification. Residues 631–644 are compositionally biased toward low complexity; sequence SGSSSVDDGSAARS. The interval 660-838 is interaction with CASR; it reads ATKWSKEATA…ELKVAIQTDI (179 aa). The segment covering 671–683 has biased composition (basic residues); the sequence is KKSKSGKLRKKSN. A compositionally biased stretch (polar residues) spans 700–717; it reads QQSTNSSEFEAPSLSDSM.

It belongs to the RBR family. RNF19 subfamily. In terms of assembly, interacts with UBE2L3 and UBE2L6. Also interacts with transcription factor Sp1. Interacts with SNCAIP, CASR and VCP.

The protein resides in the membrane. Its subcellular location is the cytoplasm. The protein localises to the cytoskeleton. It is found in the microtubule organizing center. It localises to the centrosome. It catalyses the reaction [E2 ubiquitin-conjugating enzyme]-S-ubiquitinyl-L-cysteine + [acceptor protein]-L-lysine = [E2 ubiquitin-conjugating enzyme]-L-cysteine + [acceptor protein]-N(6)-ubiquitinyl-L-lysine.. The protein operates within protein modification; protein ubiquitination. In terms of biological role, E3 ubiquitin-protein ligase which accepts ubiquitin from E2 ubiquitin-conjugating enzymes UBE2L3 and UBE2L6 in the form of a thioester and then directly transfers the ubiquitin to targeted substrates, such as SNCAIP or CASR. The chain is E3 ubiquitin-protein ligase RNF19A (RNF19A) from Sus scrofa (Pig).